We begin with the raw amino-acid sequence, 1362 residues long: DNA-directed RNA polymerase subunit beta' (1362 aa).

Residues 1–14 are compositionally biased toward basic residues; that stretch reads MTSSSKSRKSKSSK. The segment at 1 to 39 is disordered; sequence MTSSSKSRKSKSSKASKAAKEAPVSASRPLSKTPPPFRN. The segment covering 15 to 27 has biased composition (low complexity); it reads ASKAAKEAPVSAS. 4 residues coordinate Zn(2+): Cys248, Cys315, Cys322, and Cys325. The segment at 1316 to 1336 is disordered; it reads TRHNIDPSASNFAAFTRPDAD.

This sequence belongs to the RNA polymerase beta' chain family. RpoC2 subfamily. In terms of assembly, in cyanobacteria the RNAP catalytic core is composed of 2 alpha, 1 beta, 1 beta', 1 gamma and 1 omega subunit. When a sigma factor is associated with the core the holoenzyme is formed, which can initiate transcription. Zn(2+) is required as a cofactor.

The catalysed reaction is RNA(n) + a ribonucleoside 5'-triphosphate = RNA(n+1) + diphosphate. DNA-dependent RNA polymerase catalyzes the transcription of DNA into RNA using the four ribonucleoside triphosphates as substrates. The protein is DNA-directed RNA polymerase subunit beta' of Synechococcus sp. (strain CC9605).